The primary structure comprises 374 residues: tRNA-specific 2-thiouridylase MnmA (374 aa).

ATP contacts are provided by residues 8-15 (GLSGGVDS) and methionine 34. An interaction with target base in tRNA region spans residues 104–106 (NPD). Residue cysteine 109 is the Nucleophile of the active site. Cysteine 109 and cysteine 208 are joined by a disulfide. Residue glycine 134 coordinates ATP. The interval 158 to 160 (KDQ) is interaction with tRNA. Catalysis depends on cysteine 208, which acts as the Cysteine persulfide intermediate. The interval 321 to 322 (RY) is interaction with tRNA.

The protein belongs to the MnmA/TRMU family.

It is found in the cytoplasm. It carries out the reaction S-sulfanyl-L-cysteinyl-[protein] + uridine(34) in tRNA + AH2 + ATP = 2-thiouridine(34) in tRNA + L-cysteinyl-[protein] + A + AMP + diphosphate + H(+). In terms of biological role, catalyzes the 2-thiolation of uridine at the wobble position (U34) of tRNA, leading to the formation of s(2)U34. The chain is tRNA-specific 2-thiouridylase MnmA from Mesoplasma florum (strain ATCC 33453 / NBRC 100688 / NCTC 11704 / L1) (Acholeplasma florum).